The chain runs to 189 residues: GTP cyclohydrolase 1 (189 aa).

Residues cysteine 79, histidine 82, and cysteine 151 each contribute to the Zn(2+) site.

Belongs to the GTP cyclohydrolase I family. As to quaternary structure, toroid-shaped homodecamer, composed of two pentamers of five dimers.

The catalysed reaction is GTP + H2O = 7,8-dihydroneopterin 3'-triphosphate + formate + H(+). The protein operates within cofactor biosynthesis; 7,8-dihydroneopterin triphosphate biosynthesis; 7,8-dihydroneopterin triphosphate from GTP: step 1/1. This Lactiplantibacillus plantarum (strain ATCC BAA-793 / NCIMB 8826 / WCFS1) (Lactobacillus plantarum) protein is GTP cyclohydrolase 1.